The following is a 105-amino-acid chain: Small ribosomal subunit protein uS10 (105 aa).

It belongs to the universal ribosomal protein uS10 family. As to quaternary structure, part of the 30S ribosomal subunit.

Functionally, involved in the binding of tRNA to the ribosomes. This is Small ribosomal subunit protein uS10 from Chlamydia pneumoniae (Chlamydophila pneumoniae).